A 664-amino-acid polypeptide reads, in one-letter code: Glycine--tRNA ligase beta subunit (664 aa).

Belongs to the class-II aminoacyl-tRNA synthetase family. As to quaternary structure, tetramer of two alpha and two beta subunits.

The protein resides in the cytoplasm. It catalyses the reaction tRNA(Gly) + glycine + ATP = glycyl-tRNA(Gly) + AMP + diphosphate. In Aquifex aeolicus (strain VF5), this protein is Glycine--tRNA ligase beta subunit (glyS).